The following is a 136-amino-acid chain: Histone H3-7 (136 aa).

Positions 1–43 are disordered; it reads MARTKQTARKSTGGKAPRKQLATKAARKSAPATGGVKKPHRYR. An Asymmetric dimethylarginine modification is found at Arg-3. Arg-3 carries the citrulline; alternate modification. A Phosphothreonine modification is found at Thr-4. The residue at position 5 (Lys-5) is an Allysine; alternate. At Lys-5 the chain carries N6,N6,N6-trimethyllysine; alternate. The residue at position 5 (Lys-5) is an N6,N6-dimethyllysine; alternate. Lys-5 is subject to N6-(2-hydroxyisobutyryl)lysine; alternate. N6-(beta-hydroxybutyryl)lysine; alternate is present on Lys-5. N6-acetyllysine; alternate is present on Lys-5. At Lys-5 the chain carries N6-methyllysine; alternate. Residue Gln-6 is modified to 5-glutamyl dopamine; alternate. A 5-glutamyl serotonin; alternate modification is found at Gln-6. Thr-7 carries the post-translational modification Phosphothreonine. Position 9 is a citrulline; alternate (Arg-9). Residue Arg-9 is modified to Symmetric dimethylarginine. Lys-10 carries the post-translational modification N6,N6,N6-trimethyllysine; alternate. Position 10 is an N6,N6-dimethyllysine; alternate (Lys-10). N6-(2-hydroxyisobutyryl)lysine; alternate is present on Lys-10. Lys-10 bears the N6-(beta-hydroxybutyryl)lysine; alternate mark. N6-acetyllysine; alternate is present on Lys-10. Lys-10 is modified (N6-methyllysine; alternate). Lys-10 bears the N6-lactoyllysine; alternate mark. Ser-11 is subject to ADP-ribosylserine; alternate. Ser-11 is subject to Phosphoserine; alternate. Phosphothreonine is present on Thr-12. Lys-15 is modified (N6-(2-hydroxyisobutyryl)lysine; alternate). Lys-15 is modified (N6-(beta-hydroxybutyryl)lysine; alternate). Residue Lys-15 is modified to N6-acetyllysine; alternate. Lys-15 carries the N6-lactoyllysine; alternate modification. Lys-15 carries the post-translational modification N6-glutaryllysine; alternate. Lys-15 is modified (N6-succinyllysine; alternate). Asymmetric dimethylarginine is present on Arg-18. Arg-18 carries the citrulline; alternate modification. Residues Lys-19 and Lys-24 each carry the N6-(2-hydroxyisobutyryl)lysine; alternate modification. Residues Lys-19 and Lys-24 each carry the N6-(beta-hydroxybutyryl)lysine; alternate modification. 2 positions are modified to N6-acetyllysine; alternate: Lys-19 and Lys-24. Lys-19 and Lys-24 each carry N6-methyllysine; alternate. N6-lactoyllysine; alternate is present on residues Lys-19 and Lys-24. Residues Lys-19 and Lys-24 each carry the N6-glutaryllysine; alternate modification. An N6-butyryllysine; alternate mark is found at Lys-19 and Lys-24. Residue Arg-27 is modified to Citrulline. An N6,N6,N6-trimethyllysine; alternate modification is found at Lys-28. The residue at position 28 (Lys-28) is an N6,N6-dimethyllysine; alternate. Lys-28 bears the N6-(2-hydroxyisobutyryl)lysine; alternate mark. N6-acetyllysine; alternate is present on Lys-28. At Lys-28 the chain carries N6-methyllysine; alternate. The residue at position 28 (Lys-28) is an N6-lactoyllysine; alternate. Residue Lys-28 is modified to N6-glutaryllysine; alternate. Residue Ser-29 is modified to ADP-ribosylserine; alternate. Phosphoserine; alternate is present on Ser-29. The residue at position 37 (Lys-37) is an N6,N6,N6-trimethyllysine; alternate. N6,N6-dimethyllysine; alternate is present on Lys-37. Lys-37 is modified (N6-(2-hydroxyisobutyryl)lysine; alternate). Lys-37 is subject to N6-acetyllysine; alternate. Lys-37 is modified (N6-methyllysine; alternate). At Lys-38 the chain carries N6-methyllysine. Tyr-42 is subject to Phosphotyrosine. Position 57 is an N6,N6,N6-trimethyllysine; alternate (Lys-57). The residue at position 57 (Lys-57) is an N6-(2-hydroxyisobutyryl)lysine; alternate. Lys-57 carries the N6-(beta-hydroxybutyryl)lysine; alternate modification. Lys-57 carries the N6-acetyllysine; alternate modification. Lys-57 is modified (N6-lactoyllysine; alternate). Position 57 is an N6-glutaryllysine; alternate (Lys-57). An N6-succinyllysine; alternate modification is found at Lys-57. Lys-57 is modified (N6-methyllysine). Phosphoserine is present on Ser-58. 2 positions are modified to N6-(2-hydroxyisobutyryl)lysine; alternate: Lys-65 and Lys-80. Residues Lys-65 and Lys-80 each carry the N6-methyllysine; alternate modification. Lys-80 bears the N6,N6,N6-trimethyllysine; alternate mark. An N6,N6-dimethyllysine; alternate modification is found at Lys-80. At Lys-80 the chain carries N6-acetyllysine; alternate. N6-lactoyllysine; alternate is present on Lys-80. Lys-80 carries the post-translational modification N6-glutaryllysine; alternate. Lys-80 bears the N6-succinyllysine; alternate mark. Residue Thr-81 is modified to Phosphothreonine. Position 87 is a phosphoserine (Ser-87). Residue Thr-108 is modified to Phosphothreonine. Residues Lys-116 and Lys-123 each carry the N6-acetyllysine; alternate modification. Lys-116 and Lys-123 each carry N6-glutaryllysine; alternate. N6-(2-hydroxyisobutyryl)lysine; alternate is present on Lys-123. Residue Lys-123 is modified to N6-methyllysine; alternate. Lys-123 carries the post-translational modification N6-succinyllysine; alternate.

Belongs to the histone H3 family. In terms of assembly, the nucleosome is a histone octamer containing two molecules each of H2A, H2B, H3 and H4 assembled in one H3-H4 heterotetramer and two H2A-H2B heterodimers. The octamer wraps approximately 147 bp of DNA. During nucleosome assembly the chaperone ASF1A interacts with the histone H3-H4 heterodimer. In terms of processing, acetylation is generally linked to gene activation. Acetylation on Lys-10 (H3K9ac) impairs methylation at Arg-9 (H3R8me2s). Acetylation on Lys-19 (H3K18ac) and Lys-24 (H3K24ac) favors methylation at Arg-18 (H3R17me). Acetylation at Lys-123 (H3K122ac) by EP300/p300 plays a central role in chromatin structure: localizes at the surface of the histone octamer and stimulates transcription, possibly by promoting nucleosome instability. Citrullination at Arg-9 (H3R8ci) and/or Arg-18 (H3R17ci) by PADI4 impairs methylation and represses transcription. Post-translationally, asymmetric dimethylation at Arg-18 (H3R17me2a) by CARM1 is linked to gene activation. Symmetric dimethylation at Arg-9 (H3R8me2s) by PRMT5 is linked to gene repression. Asymmetric dimethylation at Arg-3 (H3R2me2a) by PRMT6 is linked to gene repression and is mutually exclusive with H3 Lys-5 methylation (H3K4me2 and H3K4me3). H3R2me2a is present at the 3' of genes regardless of their transcription state and is enriched on inactive promoters, while it is absent on active promoters. In terms of processing, methylation at Lys-5 (H3K4me), Lys-37 (H3K36me) and Lys-80 (H3K79me) are linked to gene activation. Methylation at Lys-5 (H3K4me) facilitates subsequent acetylation of H3 and H4. Methylation at Lys-80 (H3K79me) is associated with DNA double-strand break (DSB) responses and is a specific target for TP53BP1. Methylation at Lys-10 (H3K9me) and Lys-28 (H3K27me) are linked to gene repression. Methylation at Lys-10 (H3K9me) is a specific target for HP1 proteins (CBX1, CBX3 and CBX5) and prevents subsequent phosphorylation at Ser-11 (H3S10ph) and acetylation of H3 and H4. Methylation at Lys-5 (H3K4me) and Lys-80 (H3K79me) require preliminary monoubiquitination of H2B at 'Lys-120'. Methylation at Lys-10 (H3K9me) and Lys-28 (H3K27me) are enriched in inactive X chromosome chromatin. Monomethylation at Lys-57 (H3K56me1) by EHMT2/G9A in G1 phase promotes interaction with PCNA and is required for DNA replication. Phosphorylated at Thr-4 (H3T3ph) by HASPIN during prophase and dephosphorylated during anaphase. Phosphorylation at Ser-11 (H3S10ph) by AURKB is crucial for chromosome condensation and cell-cycle progression during mitosis and meiosis. In addition phosphorylation at Ser-11 (H3S10ph) by RPS6KA4 and RPS6KA5 is important during interphase because it enables the transcription of genes following external stimulation, like mitogens, stress, growth factors or UV irradiation and result in the activation of genes, such as c-fos and c-jun. Phosphorylation at Ser-11 (H3S10ph), which is linked to gene activation, prevents methylation at Lys-10 (H3K9me) but facilitates acetylation of H3 and H4. Phosphorylation at Ser-11 (H3S10ph) by AURKB mediates the dissociation of HP1 proteins (CBX1, CBX3 and CBX5) from heterochromatin. Phosphorylation at Ser-11 (H3S10ph) is also an essential regulatory mechanism for neoplastic cell transformation. Phosphorylated at Ser-29 (H3S28ph) by MAP3K20 isoform 1, RPS6KA5 or AURKB during mitosis or upon ultraviolet B irradiation. Phosphorylation at Thr-7 (H3T6ph) by PRKCB is a specific tag for epigenetic transcriptional activation that prevents demethylation of Lys-5 (H3K4me) by LSD1/KDM1A. At centromeres, specifically phosphorylated at Thr-12 (H3T11ph) from prophase to early anaphase, by DAPK3 and PKN1. Phosphorylation at Thr-12 (H3T11ph) by PKN1 or isoform M2 of PKM (PKM2) is a specific tag for epigenetic transcriptional activation that promotes demethylation of Lys-10 (H3K9me) by KDM4C/JMJD2C. Phosphorylation at Tyr-42 (H3Y41ph) by JAK2 promotes exclusion of CBX5 (HP1 alpha) from chromatin. Post-translationally, ubiquitinated. In terms of processing, lysine deamination at Lys-5 (H3K4all) to form allysine is mediated by LOXL2. Allysine formation by LOXL2 only takes place on H3K4me3 and results in gene repression. Butyrylation of histones marks active promoters and competes with histone acetylation. It is present during late spermatogenesis. Post-translationally, succinylation at Lys-80 (H3K79succ) by KAT2A takes place with a maximum frequency around the transcription start sites of genes. It gives a specific tag for epigenetic transcription activation. Desuccinylation at Lys-123 (H3K122succ) by SIRT7 in response to DNA damage promotes chromatin condensation and double-strand breaks (DSBs) repair. In terms of processing, serine ADP-ribosylation constitutes the primary form of ADP-ribosylation of proteins in response to DNA damage. Serine ADP-ribosylation at Ser-11 (H3S10ADPr) is mutually exclusive with phosphorylation at Ser-11 (H3S10ph) and impairs acetylation at Lys-10 (H3K9ac).

It localises to the nucleus. The protein resides in the chromosome. Core component of nucleosome. Nucleosomes wrap and compact DNA into chromatin, limiting DNA accessibility to the cellular machineries which require DNA as a template. Histones thereby play a central role in transcription regulation, DNA repair, DNA replication and chromosomal stability. DNA accessibility is regulated via a complex set of post-translational modifications of histones, also called histone code, and nucleosome remodeling. This is Histone H3-7 from Homo sapiens (Human).